Here is a 576-residue protein sequence, read N- to C-terminus: Adenine deaminase 2 (576 aa).

Belongs to the metallo-dependent hydrolases superfamily. Adenine deaminase family. The cofactor is Mn(2+).

The enzyme catalyses adenine + H2O + H(+) = hypoxanthine + NH4(+). In Desulfotalea psychrophila (strain LSv54 / DSM 12343), this protein is Adenine deaminase 2.